The primary structure comprises 333 residues: 6-phosphogluconolactonase (333 aa).

This sequence belongs to the cycloisomerase 2 family.

The enzyme catalyses 6-phospho-D-glucono-1,5-lactone + H2O = 6-phospho-D-gluconate + H(+). It participates in carbohydrate degradation; pentose phosphate pathway; D-ribulose 5-phosphate from D-glucose 6-phosphate (oxidative stage): step 2/3. Catalyzes the hydrolysis of 6-phosphogluconolactone to 6-phosphogluconate. The sequence is that of 6-phosphogluconolactonase from Cronobacter sakazakii (strain ATCC BAA-894) (Enterobacter sakazakii).